Consider the following 359-residue polypeptide: Fructose-1,6-bisphosphatase class 1 (359 aa).

Positions 95, 117, 119, and 120 each coordinate Mg(2+). Substrate is bound by residues 120-123 (DGSS) and Asn212. Glu284 is a Mg(2+) binding site.

This sequence belongs to the FBPase class 1 family. As to quaternary structure, homotetramer. Mg(2+) serves as cofactor.

The protein localises to the cytoplasm. The enzyme catalyses beta-D-fructose 1,6-bisphosphate + H2O = beta-D-fructose 6-phosphate + phosphate. The protein operates within carbohydrate biosynthesis; gluconeogenesis. The sequence is that of Fructose-1,6-bisphosphatase class 1 from Hydrogenophilus thermoluteolus (Pseudomonas hydrogenothermophila).